A 368-amino-acid polypeptide reads, in one-letter code: 4-hydroxy-3-methylbut-2-en-1-yl diphosphate synthase (flavodoxin) (368 aa).

Residues C271, C274, C306, and E313 each contribute to the [4Fe-4S] cluster site.

It belongs to the IspG family. [4Fe-4S] cluster is required as a cofactor.

It carries out the reaction (2E)-4-hydroxy-3-methylbut-2-enyl diphosphate + oxidized [flavodoxin] + H2O + 2 H(+) = 2-C-methyl-D-erythritol 2,4-cyclic diphosphate + reduced [flavodoxin]. The protein operates within isoprenoid biosynthesis; isopentenyl diphosphate biosynthesis via DXP pathway; isopentenyl diphosphate from 1-deoxy-D-xylulose 5-phosphate: step 5/6. Functionally, converts 2C-methyl-D-erythritol 2,4-cyclodiphosphate (ME-2,4cPP) into 1-hydroxy-2-methyl-2-(E)-butenyl 4-diphosphate. The polypeptide is 4-hydroxy-3-methylbut-2-en-1-yl diphosphate synthase (flavodoxin) (Histophilus somni (strain 129Pt) (Haemophilus somnus)).